A 134-amino-acid chain; its full sequence is Profilin-3 (134 aa).

C13 and C118 form a disulfide bridge. The Involved in PIP2 interaction motif lies at 84-100 (AVIRGKKGSGGITIKKT). At T114 the chain carries Phosphothreonine.

The protein belongs to the profilin family. As to quaternary structure, occurs in many kinds of cells as a complex with monomeric actin in a 1:1 ratio. Phosphorylated by MAP kinases.

It is found in the cytoplasm. The protein localises to the cytoskeleton. Functionally, binds to actin and affects the structure of the cytoskeleton. At high concentrations, profilin prevents the polymerization of actin, whereas it enhances it at low concentrations. This chain is Profilin-3, found in Olea europaea (Common olive).